Reading from the N-terminus, the 277-residue chain is Phosphonoacetaldehyde hydrolase-like protein (277 aa).

Belongs to the HAD-like hydrolase superfamily. PhnX family.

In Syntrophobacter fumaroxidans (strain DSM 10017 / MPOB), this protein is Phosphonoacetaldehyde hydrolase-like protein (phnX2).